The sequence spans 407 residues: Imidazolonepropionase (407 aa).

Fe(3+) is bound by residues His-68 and His-70. 2 residues coordinate Zn(2+): His-68 and His-70. Positions 77, 140, and 173 each coordinate 4-imidazolone-5-propanoate. Tyr-140 is a binding site for N-formimidoyl-L-glutamate. His-238 is a binding site for Fe(3+). His-238 provides a ligand contact to Zn(2+). Gln-241 serves as a coordination point for 4-imidazolone-5-propanoate. A Fe(3+)-binding site is contributed by Asp-313. Zn(2+) is bound at residue Asp-313. 2 residues coordinate N-formimidoyl-L-glutamate: Asn-315 and Gly-317. Position 318 (Thr-318) interacts with 4-imidazolone-5-propanoate.

The protein belongs to the metallo-dependent hydrolases superfamily. HutI family. Zn(2+) serves as cofactor. The cofactor is Fe(3+).

The protein localises to the cytoplasm. The enzyme catalyses 4-imidazolone-5-propanoate + H2O = N-formimidoyl-L-glutamate. It participates in amino-acid degradation; L-histidine degradation into L-glutamate; N-formimidoyl-L-glutamate from L-histidine: step 3/3. Functionally, catalyzes the hydrolytic cleavage of the carbon-nitrogen bond in imidazolone-5-propanoate to yield N-formimidoyl-L-glutamate. It is the third step in the universal histidine degradation pathway. The polypeptide is Imidazolonepropionase (Burkholderia mallei (strain ATCC 23344)).